The sequence spans 860 residues: Leucine--tRNA ligase (860 aa).

Positions 42-52 match the 'HIGH' region motif; it reads PYPSGRLHMGH. A 'KMSKS' region motif is present at residues 619–623; that stretch reads KMSKS. Lysine 622 contacts ATP.

This sequence belongs to the class-I aminoacyl-tRNA synthetase family.

Its subcellular location is the cytoplasm. It carries out the reaction tRNA(Leu) + L-leucine + ATP = L-leucyl-tRNA(Leu) + AMP + diphosphate. The protein is Leucine--tRNA ligase of Salmonella typhi.